We begin with the raw amino-acid sequence, 97 residues long: Small ribosomal subunit protein bS20 (97 aa).

The protein belongs to the bacterial ribosomal protein bS20 family.

Its function is as follows. Binds directly to 16S ribosomal RNA. The sequence is that of Small ribosomal subunit protein bS20 from Prochlorococcus marinus (strain MIT 9301).